Consider the following 1447-residue polypeptide: Sister chromatid cohesion protein PDS5 homolog B (1447 aa).

One copy of the HEAT repeat lies at 383 to 419 (LLVNDHLLNFVRERTLDKRWRVRKEAMMGLAQIYKKY). At Lys1136 the chain carries N6-acetyllysine. Residues 1137–1155 (PLSSAGKQSQTKSSRMETV) are compositionally biased toward polar residues. The disordered stretch occupies residues 1137 to 1447 (PLSSAGKQSQ…RRRSSKRERR (311 aa)). A phosphoserine mark is found at Ser1140, Ser1162, Ser1166, Ser1176, Ser1182, and Ser1191. Residues 1156-1167 (SNASSSSNPSSP) are compositionally biased toward low complexity. The segment covering 1172–1184 (GRLDSTEMDHSEN) has biased composition (basic and acidic residues). The span at 1196-1214 (KKSDKREDSDLVRSELEKP) shows a compositional bias: basic and acidic residues. Ser1221 carries the post-translational modification Phosphoserine. The segment covering 1225 to 1243 (PEEKLGMDDLSKLVQEQKP) has biased composition (basic and acidic residues). The span at 1245–1254 (GSQRGRKRGH) shows a compositional bias: basic residues. The a.T hook 1 DNA-binding region spans 1247-1259 (QRGRKRGHAASES). A phosphoserine mark is found at Ser1257 and Ser1259. Residues 1265–1274 (PEEKRHKEEL) show a composition bias toward basic and acidic residues. Ser1283 carries the phosphoserine modification. Residues 1287 to 1299 (KGKRGRPPKPLGG) constitute a DNA-binding region (a.T hook 2). 2 stretches are compositionally biased toward basic residues: residues 1309 to 1318 (TSKKGNKKKP) and 1341 to 1352 (KSKQQRTSKRAQ). Phosphoserine is present on residues Ser1357 and Ser1365. Residues 1358 to 1371 (PETSAVESTQSTPQ) are compositionally biased toward polar residues. Thr1366 carries the post-translational modification Phosphothreonine. At Ser1368 the chain carries Phosphoserine. Thr1369 and Thr1380 each carry phosphothreonine. Positions 1371–1383 (QKGRGRPSKTPSP) form a DNA-binding region, a.T hook 3. The span at 1378–1387 (SKTPSPSQPK) shows a compositional bias: low complexity. Ser1382, Ser1416, and Ser1419 each carry phosphoserine. Residues 1422–1432 (TTQEGAEEEDI) are compositionally biased toward acidic residues. The span at 1437-1447 (VRRRSSKRERR) shows a compositional bias: basic residues.

It belongs to the PDS5 family. In terms of assembly, interacts with the cohesin complex. Interacts with RAD21; the interaction is direct. Interacts with WAPL (via FGF motifs) or CDCA5 (via the FGF motif); the interaction is direct, cohesin-dependent and competitive. Highly expressed in intact prostate with levels decreasing after castration. Expressed exclusively in prostate cells inhibited from proliferating by long-term androgen exposure.

The protein localises to the nucleus. In terms of biological role, regulator of sister chromatid cohesion in mitosis which may stabilize cohesin complex association with chromatin. May couple sister chromatid cohesion during mitosis to DNA replication. Cohesion ensures that chromosome partitioning is accurate in both meiotic and mitotic cells and plays an important role in DNA repair. Plays a role in androgen-induced proliferative arrest in prostate cells. In Rattus norvegicus (Rat), this protein is Sister chromatid cohesion protein PDS5 homolog B (Pds5b).